Consider the following 439-residue polypeptide: Sex-determination protein fem-3 (439 aa).

Residues 21–45 (RRLKRKANDDDDDDETVRERVDDAE) form a disordered region.

In terms of assembly, component of a complex containing fem-1, fem-2 and fem-3. Interacts with fem-1 and fem-2 (via N-terminus). Part of a E3 ubiquitin-protein ligase complex, at least composed of cul-2, elc-1, tra-1, fem-1, fem-2 and fem-3; mediates the ubiquitination and subsequent proteasomal degradation of tra-1. Interacts with tra-1. Interacts with sel-10. Interacts with tra-2.

In terms of biological role, required for male development. In XO (male) animals, fem-3 directs male differentiation in all tissues. In XX (hermaphrodite) animals, it specifies the first 80 or so germ cells to be sperm. Negatively regulates male development when bound to tra-2. Together with fem-2 associates with the CBC(fem-1) E3 ubiquitin-protein ligase complex which mediates the ubiquitination and subsequent proteasomal degradation of tra-1. The protein is Sex-determination protein fem-3 of Caenorhabditis remanei (Caenorhabditis vulgaris).